The chain runs to 238 residues: NEDD4-binding protein 2-like 1 (238 aa).

Disordered stretches follow at residues 1–36 and 183–212; these read MEDSFLESFGRLSLQQRQQQPPPRPPPARGPPPRRH and VLHAEKPSRANRNQGRNSEPSSGSGYWNTY. A compositionally biased stretch (pro residues) spans 20-31; sequence QPPPRPPPARGP. Positions 192–212 are enriched in polar residues; that stretch reads ANRNQGRNSEPSSGSGYWNTY.

As to quaternary structure, interacts with dynactin subunit proteins, including DCTN4, DCTN5 and DCTN5.

In terms of biological role, might play a role in adipocyte differentiation and triglyceride accumulation. This is NEDD4-binding protein 2-like 1 (N4bp2l1) from Mus musculus (Mouse).